Reading from the N-terminus, the 279-residue chain is Troponin T, fast skeletal muscle (279 aa).

Over residues 1-21 (MSDEEVEHVEEQYEEEEEAQE) the composition is skewed to acidic residues. A disordered region spans residues 1-82 (MSDEEVEHVE…EKVDFDDIQK (82 aa)). An N-acetylserine modification is found at serine 2. Residue serine 2 is modified to Phosphoserine. Composition is skewed to basic and acidic residues over residues 28–49 (EVHE…ALED) and 70–82 (PEGE…DIQK). Serine 98 is subject to Phosphoserine. A compositionally biased stretch (basic and acidic residues) spans 121–163 (RAERAEQQRIRAEKERERQNRLAEEKARREEEDAKRRAEEDLK). A disordered region spans residues 121 to 200 (RAERAEQQRI…TAREMKKKIL (80 aa)). Phosphoserine occurs at positions 169, 176, and 177. Positions 191–200 (TAREMKKKIL) are enriched in basic and acidic residues. A Phosphoserine modification is found at serine 213. Tyrosine 229 is subject to Phosphotyrosine.

The protein belongs to the troponin T family.

Troponin T is the tropomyosin-binding subunit of troponin, the thin filament regulatory complex which confers calcium-sensitivity to striated muscle actomyosin ATPase activity. The polypeptide is Troponin T, fast skeletal muscle (TNNT3) (Oryctolagus cuniculus (Rabbit)).